The chain runs to 411 residues: KIN17-like protein (411 aa).

The C2H2-type zinc-finger motif lies at 28 to 50; the sequence is CQMCQKQCRDENGFKCHCMSESH. A winged helix-turn-helix (wHTH) region spans residues 51–160; sequence QRQMQVFGQN…KERLKNKRVK (110 aa). A coiled-coil region spans residues 147 to 183; that stretch reads ETLFKERLKNKRVKSDLAEEEKQEREIQRQIERAAEK. Disordered regions lie at residues 182 to 211 and 232 to 286; these read EKLNGGGGEGETSGNDEVVDDGDDERKKDE and VATG…EEEK. The segment covering 253–286 has biased composition (basic and acidic residues); sequence KVERGEKRKRSGDSGRSEKERRSALDELMKEEEK. A Nuclear localization signal (NLS) motif is present at residues 259-262; it reads KRKR. Residues 265 to 294 are a coiled coil; sequence DSGRSEKERRSALDELMKEEEKKKERMNRK. A C-terminal subdomain A region spans residues 301–352; the sequence is GIIVKVMSKALAEKGYYKQKGVVKKVIDNYVGEIKMLDSKHVLRVDQKELET. The tract at residues 358 to 409 is C-terminal subdomain B; that stretch reads GGMVKIVNGAYRGSNARLLGVDTEKFCAKVQIEKGVYDGRVIKSIEYEDICK.

Belongs to the KIN17 family. As to quaternary structure, interacts with SPL7. In terms of tissue distribution, expressed in root vasculature, lateral roots, cotyledons, rosette leaves, cauline leaves, stems, sepals, style of pistils, mature pollen grains and siliques.

Its subcellular location is the nucleus speckle. Its function is as follows. Promotes the copper deficiency response by direct interaction with SPL7. Acts with SPL7 in a common pathway to promote copper-responsive genes and alleviate oxidative stress during copper-limiting periods. May promote SPL7 function when copper is limiting. Participates in the control of general plant growth and development, and in the response to counteract the negative effects of UV radiation. The protein is KIN17-like protein of Arabidopsis thaliana (Mouse-ear cress).